Reading from the N-terminus, the 223-residue chain is Sigma non-opioid intracellular receptor 1 (223 aa).

At 1 to 9 the chain is on the lumenal side; the sequence is MCWAVGRRW. The targeting to endoplasmic reticulum-associated lipid droplets stretch occupies residues 2–8; the sequence is CWAVGRR. The helical transmembrane segment at 10 to 30 threads the bilayer; the sequence is AWAALLLAVAAVLAQVVWLWL. Residues 31 to 223 lie on the Cytoplasmic side of the membrane; sequence GTQSFVFQHE…LTTYLFGQDA (193 aa). Residues 99-106 are important for ligand-binding; it reads SLSEYVLL. The segment at 177–223 is C-terminal hydrophobic region; sequence VIPSTLGFALADTVFSTQDFLTLFYTLRAYARGLRLELTTYLFGQDA.

It belongs to the ERG2 family. As to quaternary structure, homotrimer. Forms a ternary complex with ANK2 and ITPR3. The complex is disrupted by agonists. Interacts with KCNA4. Interacts with KCNA2; cocaine consumption leads to increased interaction. Interacts with RNF112 in an oxidative stress-regulated manner.

Its subcellular location is the nucleus inner membrane. It is found in the nucleus outer membrane. The protein resides in the nucleus envelope. The protein localises to the cytoplasmic vesicle. It localises to the endoplasmic reticulum membrane. Its subcellular location is the membrane. It is found in the lipid droplet. The protein resides in the cell junction. The protein localises to the cell membrane. It localises to the cell projection. Its subcellular location is the growth cone. It is found in the postsynaptic density membrane. Functionally, functions in lipid transport from the endoplasmic reticulum and is involved in a wide array of cellular functions probably through regulation of the biogenesis of lipid microdomains at the plasma membrane. Involved in the regulation of different receptors it plays a role in BDNF signaling and EGF signaling. Also regulates ion channels like the potassium channel and could modulate neurotransmitter release. Plays a role in calcium signaling through modulation together with ANK2 of the ITP3R-dependent calcium efflux at the endoplasmic reticulum. Plays a role in several other cell functions including proliferation, survival and death. Originally identified for its ability to bind various psychoactive drugs it is involved in learning processes, memory and mood alteration. Necessary for proper mitochondrial axonal transport in motor neurons, in particular the retrograde movement of mitochondria. Plays a role in protecting cells against oxidative stress-induced cell death via its interaction with RNF112. This chain is Sigma non-opioid intracellular receptor 1 (SIGMAR1), found in Bos taurus (Bovine).